We begin with the raw amino-acid sequence, 152 residues long: Peptide deformylase (152 aa).

Cysteine 88 and histidine 130 together coordinate Fe cation. Residue glutamate 131 is part of the active site. Residue histidine 134 coordinates Fe cation.

It belongs to the polypeptide deformylase family. The cofactor is Fe(2+).

The enzyme catalyses N-terminal N-formyl-L-methionyl-[peptide] + H2O = N-terminal L-methionyl-[peptide] + formate. Functionally, removes the formyl group from the N-terminal Met of newly synthesized proteins. Requires at least a dipeptide for an efficient rate of reaction. N-terminal L-methionine is a prerequisite for activity but the enzyme has broad specificity at other positions. This chain is Peptide deformylase, found in Syntrophomonas wolfei subsp. wolfei (strain DSM 2245B / Goettingen).